The primary structure comprises 56 residues: Large ribosomal subunit protein bL32 (56 aa).

Over residues 1–16 the composition is skewed to basic residues; the sequence is MAVQKSKKSRAARGMR. Residues 1–22 form a disordered region; the sequence is MAVQKSKKSRAARGMRRSHDAL.

It belongs to the bacterial ribosomal protein bL32 family.

The protein is Large ribosomal subunit protein bL32 of Photobacterium profundum (strain SS9).